The chain runs to 373 residues: Capsular polysaccharide phosphotransferase (373 aa).

It belongs to the stealth family.

In terms of biological role, part of a capsule gene locus. Expression was not detected under standard growth conditions. In Neisseria meningitidis serogroup B, this protein is Capsular polysaccharide phosphotransferase.